Consider the following 1046-residue polypeptide: DNA-directed RNA polymerase subunit beta' (1046 aa).

3 residues coordinate Mg(2+): aspartate 383, aspartate 385, and aspartate 387. Residues cysteine 752, cysteine 826, cysteine 833, and cysteine 836 each contribute to the Zn(2+) site.

It belongs to the RNA polymerase beta' chain family. The RNAP catalytic core consists of 2 alpha, 1 beta, 1 beta' and 1 omega subunit. When a sigma factor is associated with the core the holoenzyme is formed, which can initiate transcription. The cofactor is Mg(2+). It depends on Zn(2+) as a cofactor.

It carries out the reaction RNA(n) + a ribonucleoside 5'-triphosphate = RNA(n+1) + diphosphate. In terms of biological role, DNA-dependent RNA polymerase catalyzes the transcription of DNA into RNA using the four ribonucleoside triphosphates as substrates. The sequence is that of DNA-directed RNA polymerase subunit beta' from Weissella hellenica.